The sequence spans 111 residues: uncharacterized protein (111 aa).

The chain crosses the membrane as a helical span at residues 20 to 39 (PVDTTGLIFFAVFASSFVLY).

It localises to the membrane. This is an uncharacterized protein from Saccharomyces cerevisiae (strain ATCC 204508 / S288c) (Baker's yeast).